A 165-amino-acid polypeptide reads, in one-letter code: Ribosome maturation factor RimM (165 aa).

The PRC barrel domain maps to Glu94–Arg163.

This sequence belongs to the RimM family. Binds ribosomal protein uS19.

It is found in the cytoplasm. An accessory protein needed during the final step in the assembly of 30S ribosomal subunit, possibly for assembly of the head region. Essential for efficient processing of 16S rRNA. May be needed both before and after RbfA during the maturation of 16S rRNA. It has affinity for free ribosomal 30S subunits but not for 70S ribosomes. This chain is Ribosome maturation factor RimM, found in Rickettsia akari (strain Hartford).